Here is a 526-residue protein sequence, read N- to C-terminus: Type 2 glycosyltransferase (526 aa).

The helical transmembrane segment at proline 25 to phenylalanine 45 threads the bilayer. 2 N-linked (GlcNAc...) asparagine glycosylation sites follow: asparagine 298 and asparagine 317. 3 consecutive transmembrane segments (helical) span residues phenylalanine 340–tryptophan 360, tryptophan 375–isoleucine 395, and phenylalanine 403–isoleucine 423. N-linked (GlcNAc...) asparagine glycans are attached at residues asparagine 426 and asparagine 517.

This sequence belongs to the GT2 glycosyltransferase family.

The protein resides in the cell membrane. It localises to the secreted. It is found in the cell wall. Functionally, glycosyltransferase involved in the maintenance of the outermost surface of the fungal cell wall. Likely functions in the synthesis of a currently unknown, potentially minor but widespread, extracellular or outer cell wall polysaccharide which plays a key role in facilitating many interactions between plants and fungi by enabling hyphal growth on solid matrices. In Gibberella zeae (strain ATCC MYA-4620 / CBS 123657 / FGSC 9075 / NRRL 31084 / PH-1) (Wheat head blight fungus), this protein is Type 2 glycosyltransferase.